Consider the following 86-residue polypeptide: RNA-binding protein Hfq (86 aa).

Residues 10–71 (DLFLNNARKE…VSTIQPGKYI (62 aa)) form the Sm domain.

It belongs to the Hfq family. Homohexamer.

RNA chaperone that binds small regulatory RNA (sRNAs) and mRNAs to facilitate mRNA translational regulation in response to envelope stress, environmental stress and changes in metabolite concentrations. Also binds with high specificity to tRNAs. The chain is RNA-binding protein Hfq from Clostridioides difficile (strain 630) (Peptoclostridium difficile).